Here is an 859-residue protein sequence, read N- to C-terminus: DNA mismatch repair protein MutS (859 aa).

Residue 612 to 619 (GPNMGGKS) participates in ATP binding. The interval 797–822 (SKPLAPSATPPSSYAAPSPAAAPAQA) is disordered.

It belongs to the DNA mismatch repair MutS family.

Its function is as follows. This protein is involved in the repair of mismatches in DNA. It is possible that it carries out the mismatch recognition step. This protein has a weak ATPase activity. In Alcanivorax borkumensis (strain ATCC 700651 / DSM 11573 / NCIMB 13689 / SK2), this protein is DNA mismatch repair protein MutS.